Reading from the N-terminus, the 206-residue chain is Large ribosomal subunit protein uL4 (206 aa).

Belongs to the universal ribosomal protein uL4 family. Part of the 50S ribosomal subunit.

One of the primary rRNA binding proteins, this protein initially binds near the 5'-end of the 23S rRNA. It is important during the early stages of 50S assembly. It makes multiple contacts with different domains of the 23S rRNA in the assembled 50S subunit and ribosome. Its function is as follows. Forms part of the polypeptide exit tunnel. The sequence is that of Large ribosomal subunit protein uL4 from Rhodopseudomonas palustris (strain BisA53).